The following is a 231-amino-acid chain: LexA repressor (231 aa).

The segment at residues 26–46 (FDEMKDALDLRSKSGIHRLIT) is a DNA-binding region (H-T-H motif). Active-site for autocatalytic cleavage activity residues include Ser-152 and Lys-190.

The protein belongs to the peptidase S24 family. In terms of assembly, homodimer.

It catalyses the reaction Hydrolysis of Ala-|-Gly bond in repressor LexA.. Represses a number of genes involved in the response to DNA damage (SOS response), including recA and lexA. In the presence of single-stranded DNA, RecA interacts with LexA causing an autocatalytic cleavage which disrupts the DNA-binding part of LexA, leading to derepression of the SOS regulon and eventually DNA repair. This chain is LexA repressor, found in Dinoroseobacter shibae (strain DSM 16493 / NCIMB 14021 / DFL 12).